The chain runs to 107 residues: Flagellar transcriptional regulator FlhD (107 aa).

This sequence belongs to the FlhD family. Homodimer; disulfide-linked. Forms a heterohexamer composed of two FlhC and four FlhD subunits. Each FlhC binds a FlhD dimer, forming a heterotrimer, and a hexamer assembles by dimerization of two heterotrimers.

Its subcellular location is the cytoplasm. Its function is as follows. Functions in complex with FlhC as a master transcriptional regulator that regulates transcription of several flagellar and non-flagellar operons by binding to their promoter region. Activates expression of class 2 flagellar genes, including fliA, which is a flagellum-specific sigma factor that turns on the class 3 genes. Also regulates genes whose products function in a variety of physiological pathways. The polypeptide is Flagellar transcriptional regulator FlhD (Bordetella avium (strain 197N)).